A 103-amino-acid polypeptide reads, in one-letter code: Large ribosomal subunit protein bL21 (103 aa).

Belongs to the bacterial ribosomal protein bL21 family. Part of the 50S ribosomal subunit. Contacts protein L20.

This protein binds to 23S rRNA in the presence of protein L20. This Hahella chejuensis (strain KCTC 2396) protein is Large ribosomal subunit protein bL21.